The sequence spans 464 residues: uncharacterized protein (464 aa).

Transmembrane regions (helical) follow at residues 7-27 (VLNVFSLVMINVIAVDSLRTL), 37-57 (LVFYYIFAALTFFIPVALVAA), 94-114 (VVWYPTMLAFIAATLSYLIAP), 121-141 (FYLLGTALTLFWVFTFLNCFG), 153-173 (ASIGTLLPMIVIIVLGAVWIF), 196-216 (LSLFSAVLFGLIGMEMSAVHA), 231-251 (FYSALLIISTLSLGSLAIVIV), 282-302 (VIAVLIILGGLSGVSAWIIGP), 329-349 (VAILLTQGVIFTVLSTVFILL), 359-379 (LSDLSAQMALLVYIMMFAAAI), 401-421 (MSLISGIGIICCIAAMIVGFI), and 432-452 (FLFECFLIGGLILFVFIPWLF).

This sequence belongs to the amino acid-polyamine-organocation (APC) superfamily.

The protein localises to the cell membrane. This is an uncharacterized protein from Legionella pneumophila subsp. pneumophila (strain Philadelphia 1 / ATCC 33152 / DSM 7513).